The chain runs to 541 residues: MNPSTAQATAVVDELVRGGVREVVLCPGSRNAPLAFALQAADLEGRLRLHMRIDERTAGFLALGLAVAGKRPVPIVMTSGTAVANLGPAVLEANYARVPLVVLSANRPYEMLGTGANQTIEQLGLFGSQVRATISLGLAEDDAGQNSQWRSAVCRVLAAARGTRSGNAGPVHFDIPLREPLVPDVHAQGPVPQGRPGGAAWTTTQHATLDVPMDLDLTPDTIVISGHGSALRPELAGLPTVAEPTAPLHGIPVHPMALPQLKPRQAVITGRPTLHRSVSKVLADPSVAVYALTTGPRWPDVSGNVLATGTRAVVSGEPDRAWINRCRTLSEHTDKAVRAQLAAHPKATGLHVAAAVMDALTDGDQLLLGASNPVRDAALVSYPAPKIRVLSNRGVAGIDGTVSAAVGAALAYEEGRTVALLGDLTFLHDASGLLIGSGEPRPRDLTIVVANDDGGGIFELLEQGDPQYAGVFERVFGTPHGMDLAALCAAYRVEHHLVGLGELSTRLSAPEAPGDRGIRVLEVTTERSGLRELHAAVRAQL.

This sequence belongs to the TPP enzyme family. MenD subfamily. In terms of assembly, homodimer. Mg(2+) serves as cofactor. Mn(2+) is required as a cofactor. Requires thiamine diphosphate as cofactor.

It carries out the reaction isochorismate + 2-oxoglutarate + H(+) = 5-enolpyruvoyl-6-hydroxy-2-succinyl-cyclohex-3-ene-1-carboxylate + CO2. Its pathway is quinol/quinone metabolism; 1,4-dihydroxy-2-naphthoate biosynthesis; 1,4-dihydroxy-2-naphthoate from chorismate: step 2/7. The protein operates within quinol/quinone metabolism; menaquinone biosynthesis. In terms of biological role, catalyzes the thiamine diphosphate-dependent decarboxylation of 2-oxoglutarate and the subsequent addition of the resulting succinic semialdehyde-thiamine pyrophosphate anion to isochorismate to yield 2-succinyl-5-enolpyruvyl-6-hydroxy-3-cyclohexene-1-carboxylate (SEPHCHC). The sequence is that of 2-succinyl-5-enolpyruvyl-6-hydroxy-3-cyclohexene-1-carboxylate synthase from Rhodococcus jostii (strain RHA1).